Consider the following 275-residue polypeptide: tRNA-splicing endonuclease subunit SEN34 (275 aa).

Residues Tyr209, His217, and Lys250 contribute to the active site.

This sequence belongs to the tRNA-intron endonuclease family. As to quaternary structure, heterotetramer composed of SEN2, SEN15, SEN34 and SEN54. Interacts directly with SEN15.

It is found in the nucleus. The protein resides in the endomembrane system. It localises to the mitochondrion outer membrane. It carries out the reaction pretRNA = a 3'-half-tRNA molecule with a 5'-OH end + a 5'-half-tRNA molecule with a 2',3'-cyclic phosphate end + an intron with a 2',3'-cyclic phosphate and a 5'-hydroxyl terminus.. Functionally, constitutes one of the two catalytic subunit of the tRNA-splicing endonuclease complex, a complex responsible for identification and cleavage of the splice sites in pre-tRNA. It cleaves pre-tRNA at the 5'- and 3'-splice sites to release the intron. The products are an intron and two tRNA half-molecules bearing 2',3'-cyclic phosphate and 5'-OH termini. There are no conserved sequences at the splice sites, but the intron is invariably located at the same site in the gene, placing the splice sites an invariant distance from the constant structural features of the tRNA body. It probably carries the active site for 3'-splice site cleavage. The polypeptide is tRNA-splicing endonuclease subunit SEN34 (SEN34) (Saccharomyces cerevisiae (strain ATCC 204508 / S288c) (Baker's yeast)).